A 1528-amino-acid polypeptide reads, in one-letter code: Intraflagellar transport protein 121 (1528 aa).

WD repeat units follow at residues 123–170 (SNRA…GSAP), 244–285 (SSMP…SSVS), 619–667 (PSLT…SEFL), and 759–798 (PELI…REDS). Residues 914–933 (DSGLDVTASNSSQPSTQTSQ) form a disordered region. Over residues 920–933 (TASNSSQPSTQTSQ) the composition is skewed to low complexity.

It localises to the cell projection. The protein resides in the cilium. The protein localises to the flagellum. Its subcellular location is the cytoplasm. It is found in the cytoskeleton. It localises to the flagellum axoneme. The protein resides in the flagellum basal body. Component of the intraflagellar transport complex A (IFT-A) involved in flagellar assembly. The protein is Intraflagellar transport protein 121 of Giardia intestinalis (strain ATCC 50803 / WB clone C6) (Giardia lamblia).